Here is a 229-residue protein sequence, read N- to C-terminus: Predicted GPI-anchored protein 19 (229 aa).

Residues 1–20 form the signal peptide; that stretch reads MFSTTSIVLWFTILLPVTLP. The segment at 63–92 is disordered; that stretch reads DNEQVLRKSKKKKKTTSTGTPGNENTTDFA. The segment covering 81 to 92 has biased composition (polar residues); sequence GTPGNENTTDFA. N-linked (GlcNAc...) asparagine glycosylation is found at Asn87, Asn184, and Asn189. The GPI-anchor amidated glycine moiety is linked to residue Gly208. Positions 209 to 229 are cleaved as a propeptide — removed in mature form; that stretch reads FGSLIPYNSFYLYILLFCIIF.

The protein resides in the cell membrane. Its function is as follows. Predicted GPI-anchored protein which may have a role during host infection. The protein is Predicted GPI-anchored protein 19 (PGA19) of Candida albicans (strain SC5314 / ATCC MYA-2876) (Yeast).